We begin with the raw amino-acid sequence, 90 residues long: Small ribosomal subunit protein uS15 (90 aa).

The protein belongs to the universal ribosomal protein uS15 family. In terms of assembly, part of the 30S ribosomal subunit. Forms a bridge to the 50S subunit in the 70S ribosome, contacting the 23S rRNA.

Functionally, one of the primary rRNA binding proteins, it binds directly to 16S rRNA where it helps nucleate assembly of the platform of the 30S subunit by binding and bridging several RNA helices of the 16S rRNA. In terms of biological role, forms an intersubunit bridge (bridge B4) with the 23S rRNA of the 50S subunit in the ribosome. The sequence is that of Small ribosomal subunit protein uS15 from Helicobacter pylori (strain Shi470).